A 479-amino-acid chain; its full sequence is Integrator complex subunit 12 (479 aa).

Positions 57–140 are disordered; sequence SKVSLPKMTK…SPIAFQTKDI (84 aa). Low complexity predominate over residues 70 to 90; the sequence is KSSSSSSASSSITTTSSSKSS. Over residues 91–128 the composition is skewed to basic and acidic residues; that stretch reads TSEKSKKESEKRTLEKIRVDPGEGVEPPKKPRLEKQDS. The PHD-type zinc-finger motif lies at 161-217; sequence GLACVVCRQMTVTSGNQLVECQECHNLYHQECHKPQVTDKDVNDPRLVWYCARCTRQ. Disordered regions lie at residues 221–241, 274–293, and 305–479; these read MAQK…TTVP, TAAS…LPPG, and SNVG…KLKK. Composition is skewed to low complexity over residues 223–239 and 280–289; these read QKTQ…LATT and SSSSSSSSSS. Residues 305–328 show a composition bias toward polar residues; it reads SNVGPSSTKLSTSQSGNSKTSPAA. The span at 354 to 364 shows a compositional bias: gly residues; the sequence is SSAGSGNGNNG. Low complexity predominate over residues 399-411; it reads GSLSPGAAPSSSL. Residues 412–428 show a composition bias toward gly residues; that stretch reads GGNGGSGGNGAGNGGNS. The segment covering 429–451 has biased composition (low complexity); the sequence is AGSSSSSGNNNNNGAKASADGKA. The segment covering 466–479 has biased composition (basic residues); it reads QMVKKKAAQKKLKK.

This sequence belongs to the Integrator subunit 12 family. As to quaternary structure, component of the Integrator complex, composed of core subunits INTS1, INTS2, INTS3, INTS4, INTS5, INTS6, INTS7, INTS8, INTS9/RC74, INTS10, INTS11/CPSF3L, INTS12, INTS13, INTS14 and INTS15. The core complex associates with protein phosphatase 2A subunits PPP2CA and PPP2R1A, to form the Integrator-PP2A (INTAC) complex.

Its subcellular location is the nucleus. Its function is as follows. Component of the integrator complex, a multiprotein complex that terminates RNA polymerase II (Pol II) transcription in the promoter-proximal region of genes. The integrator complex provides a quality checkpoint during transcription elongation by driving premature transcription termination of transcripts that are unfavorably configured for transcriptional elongation: the complex terminates transcription by (1) catalyzing dephosphorylation of the C-terminal domain (CTD) of Pol II subunit POLR2A/RPB1 and SUPT5H/SPT5, (2) degrading the exiting nascent RNA transcript via endonuclease activity and (3) promoting the release of Pol II from bound DNA. The integrator complex is also involved in terminating the synthesis of non-coding Pol II transcripts, such as enhancer RNAs (eRNAs), small nuclear RNAs (snRNAs), telomerase RNAs and long non-coding RNAs (lncRNAs). The sequence is that of Integrator complex subunit 12 (ints12) from Danio rerio (Zebrafish).